Consider the following 144-residue polypeptide: Large ribosomal subunit protein uL16 (144 aa).

The protein belongs to the universal ribosomal protein uL16 family. Part of the 50S ribosomal subunit.

Functionally, binds 23S rRNA and is also seen to make contacts with the A and possibly P site tRNAs. This chain is Large ribosomal subunit protein uL16, found in Clostridium beijerinckii (strain ATCC 51743 / NCIMB 8052) (Clostridium acetobutylicum).